A 609-amino-acid chain; its full sequence is Kelch domain-containing protein 10 homolog (609 aa).

Residues Ala103–Glu146 form a disordered region. The segment covering Ser104 to Ser137 has biased composition (acidic residues). 6 Kelch repeats span residues His214–Asn277, Leu279–His334, Phe335–His381, His389–Gly437, Glu458–Asn508, and Cys510–Asn554. Residues Leu576–Gln609 form a disordered region.

As to quaternary structure, interacts with Elongin-C; may be the substrate recognition component of an E3 ubiquitin ligase complex.

Its function is as follows. Activates the Pk92B/DASK1-MAPK signaling cascade. The protein is Kelch domain-containing protein 10 homolog (slim) of Drosophila melanogaster (Fruit fly).